The following is a 432-amino-acid chain: MGNNVVVLGTQWGDEGKGKIVDLLTERAKYVVRYQGGHNAGHTLVINGEKTVLHLIPSGILRENVTSIIGNGVVLSPAALMKEMKELEDRGIPVRERLLLSEACPLILDYHVALDNACEKARGAKAIGTTGRGIGPAYEDKVARRGLRVGDLFDKETFAEKLKEVMEYHNFQLVNYYKAEAVDYQKVLDDTMAVADILTSMVVDVSDLLDQARQRGDFVMFEGAQGTLLDIDHGTYPYVTSSNTTAGGVATGSGLGPRYVDYVLGILKAYSTRVGAGPFPTELFDETGEFLCKQGNEYGATTGRRRRTGWLDTVAVRRAVQLNSLSGFCLTKLDVLDGLKEVKLCVAYRMPDGREVTTTPLAADDWKGVEPIYETMPGWSESTFGVKDRSGLPQAALNYIKRIEELTGVPIDIISTGPDRTETMILRDPFDA.

GTP is bound by residues 13–19 (GDEGKGK) and 41–43 (GHT). D14 acts as the Proton acceptor in catalysis. Mg(2+) contacts are provided by D14 and G41. IMP-binding positions include 14–17 (DEGK), 39–42 (NAGH), T130, R144, Q225, T240, and R304. Residue H42 is the Proton donor of the active site. 300–306 (ATTGRRR) provides a ligand contact to substrate. Residues R306, 332-334 (KLD), and 415-417 (STG) contribute to the GTP site.

It belongs to the adenylosuccinate synthetase family. Homodimer. It depends on Mg(2+) as a cofactor.

The protein localises to the cytoplasm. The catalysed reaction is IMP + L-aspartate + GTP = N(6)-(1,2-dicarboxyethyl)-AMP + GDP + phosphate + 2 H(+). It functions in the pathway purine metabolism; AMP biosynthesis via de novo pathway; AMP from IMP: step 1/2. Its function is as follows. Plays an important role in the de novo pathway of purine nucleotide biosynthesis. Catalyzes the first committed step in the biosynthesis of AMP from IMP. The chain is Adenylosuccinate synthetase from Salmonella choleraesuis (strain SC-B67).